A 446-amino-acid chain; its full sequence is NADH-dependent phenylglyoxylate dehydrogenase subunit beta (446 aa).

4Fe-4S ferredoxin-type domains follow at residues 6 to 35 (STIAFDPAKCDGCGDCMTACAQAKTGTDDI), 49 to 80 (ADKTFELALCRQCADPKCVTVCPAGALNKDGT), 82 to 111 (GVIGWDATKCVDCLLCTVGCAYAGIALDEA), and 109 to 141 (DEATGHVAKCDTCDGNPACVPACPHGALKHITT).

In terms of assembly, dimer of heteropentamers composed of an alpha (PadG), a beta (PadI), a gamma (PadE), a delta (PadF) and an epsilon (PadH) subunit. [4Fe-4S] cluster is required as a cofactor.

The enzyme catalyses phenylglyoxylate + NAD(+) + CoA = benzoyl-CoA + CO2 + NADH. Its activity is regulated as follows. Activated by magnesium ions and thiamine diphosphate. In terms of biological role, involved in the anaerobic metabolism of phenylalanine and phenylacetate. Catalyzes the oxidative decarboxylation of phenylglyoxylate to benzoyl-CoA and CO(2). It can also react slowly with 2-oxo-3-methylbutanoate and use different electron acceptors such as benzyl viologen, methyl viologen, FAD or FMN, but NAD seems to be the physiological electron acceptor. Also catalyzes an isotope exchange between CO(2) and the carboxyl group which proves partial or complete reversibility of the oxidative decarboxylation reaction. The polypeptide is NADH-dependent phenylglyoxylate dehydrogenase subunit beta (padI) (Aromatoleum evansii (Azoarcus evansii)).